Here is an 89-residue protein sequence, read N- to C-terminus: Putative ankyrin repeat protein RF_1157 (89 aa).

An ANK repeat occupies 2–32; that stretch reads YNTTPLNFAINQENNEEVIKYLLANGANPRL.

The chain is Putative ankyrin repeat protein RF_1157 from Rickettsia felis (strain ATCC VR-1525 / URRWXCal2) (Rickettsia azadi).